A 142-amino-acid chain; its full sequence is Large ribosomal subunit protein uL13 (142 aa).

Belongs to the universal ribosomal protein uL13 family. In terms of assembly, part of the 50S ribosomal subunit.

In terms of biological role, this protein is one of the early assembly proteins of the 50S ribosomal subunit, although it is not seen to bind rRNA by itself. It is important during the early stages of 50S assembly. The chain is Large ribosomal subunit protein uL13 from Acidithiobacillus ferrooxidans (strain ATCC 23270 / DSM 14882 / CIP 104768 / NCIMB 8455) (Ferrobacillus ferrooxidans (strain ATCC 23270)).